Consider the following 62-residue polypeptide: uncharacterized protein (62 aa).

This is an uncharacterized protein from Escherichia coli.